A 581-amino-acid chain; its full sequence is Putative adenine deaminase BH0637 (581 aa).

This sequence belongs to the metallo-dependent hydrolases superfamily. Adenine deaminase family.

It catalyses the reaction adenine + H2O + H(+) = hypoxanthine + NH4(+). In Halalkalibacterium halodurans (strain ATCC BAA-125 / DSM 18197 / FERM 7344 / JCM 9153 / C-125) (Bacillus halodurans), this protein is Putative adenine deaminase BH0637.